Consider the following 1323-residue polypeptide: Sister chromatid cohesion protein PDS5 homolog A-A (1323 aa).

An HEAT repeat occupies Phe-385–Tyr-421. The segment at Leu-1139 to Arg-1323 is disordered. The segment covering Ser-1153–Ser-1165 has biased composition (low complexity). Polar residues-rich tracts occupy residues Asp-1166–Glu-1176 and Leu-1210–Thr-1220. Positions Asn-1235–Asp-1246 are enriched in basic and acidic residues.

As to quaternary structure, interacts with the cohesin complex. Binds chromatin in a cohesin-dependent manner.

Its subcellular location is the nucleus. In terms of biological role, may regulate sister chromatid cohesion during mitosis and couple it to DNA replication. The chain is Sister chromatid cohesion protein PDS5 homolog A-A (pds5a-a) from Xenopus laevis (African clawed frog).